A 600-amino-acid chain; its full sequence is Na(+)/dicarboxylate cotransporter 3 (600 aa).

The Cytoplasmic segment spans residues 1-16; sequence MAALAALAKKVWSARR. The chain crosses the membrane as a helical span at residues 17–37; that stretch reads LLVLLLVPLALLPILFALPPK. At 38-55 the chain is on the extracellular side; that stretch reads EGRCLYVILLMAVYWCTE. The chain crosses the membrane as a helical span at residues 56–76; sequence ALPLSVTALLPIILFPFMGIL. Residues 77–82 lie on the Cytoplasmic side of the membrane; that stretch reads PSSKVC. A helical membrane pass occupies residues 83 to 103; the sequence is PQYFLDTNFLFLSGLIMASAI. Residues 104–137 are Extracellular-facing; sequence EERNLHRRIALKVLMLVGVQPARLILGMMVTTSF. A helical membrane pass occupies residues 138-158; the sequence is LSMWLSNTASTAMMLPIASAI. Topologically, residues 159 to 229 are cytoplasmic; the sequence is LKSLFGQRDT…KEEEHRRNIW (71 aa). The chain crosses the membrane as a helical span at residues 230-250; that stretch reads KGFLISIPYSASIGGTATLTG. Residues 251–278 lie on the Extracellular side of the membrane; that stretch reads TAPNLILLGQLKSFFPQCDVVNFGSWFI. Residues 279–299 traverse the membrane as a helical segment; the sequence is FAFPLMLLFLLVGWLWISFLY. At 300–336 the chain is on the cytoplasmic side; sequence GGMSWRGWRKKNSKLQDVAEDKAKAVIQEEFQNLGPI. Residues 337–357 form a helical membrane-spanning segment; it reads KFAEQAVFILFCLFAILLFSR. The Extracellular segment spans residues 358–372; the sequence is DPKFIPGWASLFAPG. Residues 373–393 traverse the membrane as a helical segment; it reads FVSDAVTGVAIVTILFFFPSQ. Over 394–422 the chain is Cytoplasmic; sequence KPSLKWWFDFKAPNSETEPLLSWKKAQET. Residues 423–443 constitute an intramembrane region (helical); it reads VPWNIILLLGGGFAMAKGCEE. Over 444–461 the chain is Cytoplasmic; sequence SGLSAWIGGQLHPLEHVP. Residues 462 to 482 form a helical membrane-spanning segment; sequence PLLAVLLITVVIAFFTEFASN. Residues 483–505 are Extracellular-facing; the sequence is TATIIIFLPVLAELAIRLHVHPL. A helical transmembrane segment spans residues 506-526; sequence YLMIPGTVSCSYAFMLPVSTP. At 527 to 546 the chain is on the cytoplasmic side; sequence PNSIAFSTGHLLVKDMVRTG. A helical transmembrane segment spans residues 547-567; it reads LLMNLMGVLLLSLAMNTWAQA. Topologically, residues 568-600 are extracellular; the sequence is IFQLGTFPDWANTHAANVTALPPALTNNTVQTL. 2 N-linked (GlcNAc...) asparagine glycosylation sites follow: asparagine 584 and asparagine 594.

This sequence belongs to the SLC13A/DASS transporter (TC 2.A.47) family. NADC subfamily. Highly expressed in proximal parts of straight tubules in the kidney. Detected in placenta, in brain, and in liver. Strongly expressed within the meningeal layers of supporting tissue that surround the brain and relatively weakly expressed throughout the cerebral cortex, hippocampus, and cerebellum.

Its subcellular location is the cell membrane. The enzyme catalyses succinate(out) + 3 Na(+)(out) = succinate(in) + 3 Na(+)(in). It catalyses the reaction 2-oxoglutarate(out) + 3 Na(+)(out) = 2-oxoglutarate(in) + 3 Na(+)(in). The catalysed reaction is N-acetyl-L-aspartate(out) + 3 Na(+)(out) = N-acetyl-L-aspartate(in) + 3 Na(+)(in). It carries out the reaction glutarate(out) + 3 Na(+)(out) = glutarate(in) + 3 Na(+)(in). The enzyme catalyses fumarate(out) + 3 Na(+)(out) = fumarate(in) + 3 Na(+)(in). It catalyses the reaction malate(out) + 3 Na(+)(out) = malate(in) + 3 Na(+)(in). The catalysed reaction is 2,2-dimethylsuccinate(out) + 3 Na(+)(out) = 2,2-dimethylsuccinate(in) + 3 Na(+)(in). It carries out the reaction 2,3-dimethylsuccinate(out) + 3 Na(+)(out) = 2,3-dimethylsuccinate(in) + 3 Na(+)(in). The enzyme catalyses itaconate(out) + 3 Na(+)(out) = itaconate(in) + 3 Na(+)(in). Its activity is regulated as follows. Li(+) decreases succinate transport in the presence of Na(+). Functionally, high-affinity sodium-dicarboxylate cotransporter that accepts a range of substrates with 4-6 carbon atoms, such as the citric acid cycle intermediates succinate and alpha-ketoglutarate (2-oxoglutarate), as well as other compounds including N-acetyl-L-aspartate. Transports the dicarboxylate into the cell with a probable stoichiometry of 3 Na(+) for 1 divalent dicarboxylate, rendering the process electrogenic. Can transport citrate in a Na(+)-dependent manner, recognizing the divalent form of citrate rather than the trivalent form which is normally found in blood. Imports itaconate in hepatocytes leading to activation of TFEB-dependent lysosomal biogenesis involved in antibacterial innate immune response. The sequence is that of Na(+)/dicarboxylate cotransporter 3 (Slc13a3) from Rattus norvegicus (Rat).